Here is a 187-residue protein sequence, read N- to C-terminus: Peptide deformylase (187 aa).

Fe cation is bound by residues Cys107 and His149. Glu150 is a catalytic residue. A Fe cation-binding site is contributed by His153.

This sequence belongs to the polypeptide deformylase family. Fe(2+) is required as a cofactor.

It catalyses the reaction N-terminal N-formyl-L-methionyl-[peptide] + H2O = N-terminal L-methionyl-[peptide] + formate. In terms of biological role, removes the formyl group from the N-terminal Met of newly synthesized proteins. Requires at least a dipeptide for an efficient rate of reaction. N-terminal L-methionine is a prerequisite for activity but the enzyme has broad specificity at other positions. The chain is Peptide deformylase from Picosynechococcus sp. (strain ATCC 27264 / PCC 7002 / PR-6) (Agmenellum quadruplicatum).